The primary structure comprises 198 residues: Cyclin-dependent kinase inhibitor 1B (198 aa).

A compositionally biased stretch (polar residues) spans 1–12 (MSNVRVSNGSPT). A disordered region spans residues 1 to 30 (MSNVRVSNGSPTSERRDAKQAEYPKPSACR). Ser10 bears the Phosphoserine; by UHMK1 mark. Positions 13–22 (SERRDAKQAE) are enriched in basic and acidic residues. The interval 51–91 (DMEEASQNKWNFDFQNHKPLEGKYEWQEVEKGSLPEFYYRP) is interaction with CDK2. Phosphotyrosine; by SRC is present on Tyr74. The disordered stretch occupies residues 87–198 (FYYRPPRPPK…KKPGLRRRQT (112 aa)). Tyr88 is modified (phosphotyrosine; by ABL, LYN and SRC). Tyr89 is subject to Phosphotyrosine. Over residues 104–113 (QESQDVSGTR) the composition is skewed to polar residues. Residues 126-137 (EDTHLVDQKTDA) show a composition bias toward basic and acidic residues. The Nuclear localization signal motif lies at 153 to 169 (KRPATDDSSPQNKRANR). Thr157 is modified (phosphothreonine; by CaMK1, PKB/AKT1 and PIM1). Residue Thr170 is modified to Phosphothreonine. Residues 175 to 186 (SDGSPNAGSVEQ) are compositionally biased toward polar residues. Thr187 carries the post-translational modification Phosphothreonine; by PKB/AKT1, CDK1 and CDK2. Thr198 bears the Phosphothreonine; by CaMK1, PKB/AKT1, RPS6KA1, RPS6KA3 and PIM1 mark.

It belongs to the CDI family. As to quaternary structure, forms a ternary complex composed of CCNE1, CDK2 and CDKN1B. Interacts directly with CCNE1; the interaction is inhibited by CDK2-dependent phosphorylation on Thr-187. Interacts with COPS5, subunit of the COP9 signalosome complex; the interaction leads to CDKN1B degradation. Interacts with NUP50; the interaction leads to nuclear import and degradation of phosphorylated CDKN1B. Interacts with CCND1 and SNX6. Interacts (Thr-198-phosphorylated form) with 14-3-3 proteins, binds strongly YWHAQ, weakly YWHAE and YWHAH, but not YWHAB nor YWHAZ; the interaction with YWHAQ results in translocation to the cytoplasm. Interacts with AKT1 and LYN; the interactions lead to cytoplasmic mislocation, phosphorylation of CDKN1B and inhibition of cell cycle arrest. Forms a ternary complex with CCNA2 and CDK2; CDKN1B inhibits the kinase activity of CDK2 through conformational rearrangements. Interacts (unphosphorylated form) with CDK2. Forms a complex with CDK2 and SPDYA, but does not directly interact with SPDYA. Forms a ternary complex composed of cyclin D, CDK4 and CDKN1B. Interacts (phosphorylated on Tyr-88 and Tyr-89) with CDK4; the interaction is required for cyclin D and CDK4 complex assembly, induces nuclear translocation and activates the CDK4 kinase activity. Interacts with GRB2. Interacts with PIM1. Identified in a complex with SKP1, SKP2 and CKS1B. Interacts with UHMK1; the interaction leads to cytoplasmic mislocation, phosphorylation of CDKN1B and inhibition of cell cycle arrest. Also interacts with CDK1. Dephosphorylated on Thr-187 by PPM1H, leading to CDKN1B stability. In terms of processing, phosphorylated; phosphorylation occurs on serine, threonine and tyrosine residues. Phosphorylation on Ser-10 is the major site of phosphorylation in resting cells, takes place at the G(0)-G(1) phase and leads to protein stability. Phosphorylation on other sites is greatly enhanced by mitogens, growth factors, cMYC and in certain cancer cell lines. The phosphorylated form found in the cytoplasm is inactivate. Phosphorylation on Thr-198 is required for interaction with 14-3-3 proteins. Phosphorylation on Thr-187, by CDK1 and CDK2 leads to protein ubiquitination and proteasomal degradation. Tyrosine phosphorylation promotes this process. Phosphorylation by PKB/AKT1 can be suppressed by LY294002, an inhibitor of the catalytic subunit of PI3K. Phosphorylation on Tyr-88 and Tyr-89 has no effect on binding CDK2, but is required for binding CDK4. Dephosphorylated on tyrosine residues by G-CSF. Dephosphorylated on Thr-187 by PPM1H, leading to CDKN1B stability. Post-translationally, ubiquitinated; in the cytoplasm by the KPC complex (composed of RNF123/KPC1 and UBAC1/KPC2) and, in the nucleus, by SCF(SKP2). The latter requires prior phosphorylation on Thr-187. Ubiquitinated; by a TRIM21-containing SCF(SKP2)-like complex; leads to its degradation. Subject to degradation in the lysosome. Interaction with SNX6 promotes lysosomal degradation.

It is found in the nucleus. It localises to the cytoplasm. The protein resides in the endosome. Functionally, important regulator of cell cycle progression. Inhibits the kinase activity of CDK2 bound to cyclin A, but has little inhibitory activity on CDK2 bound to SPDYA. Involved in G1 arrest. Potent inhibitor of cyclin E- and cyclin A-CDK2 complexes. Forms a complex with cyclin type D-CDK4 complexes and is involved in the assembly, stability, and modulation of CCND1-CDK4 complex activation. Acts either as an inhibitor or an activator of cyclin type D-CDK4 complexes depending on its phosphorylation state and/or stoichometry. This Canis lupus familiaris (Dog) protein is Cyclin-dependent kinase inhibitor 1B (CDKN1B).